The sequence spans 344 residues: Ketol-acid reductoisomerase (NADP(+)) (344 aa).

The KARI N-terminal Rossmann domain occupies 2 to 181; that stretch reads EKIYYDADIS…GAGRAGILTT (180 aa). NADP(+)-binding positions include 25-28, arginine 48, serine 52, and 82-85; these read YGSQ and DERQ. The active site involves histidine 107. Glycine 133 contacts NADP(+). The KARI C-terminal knotted domain occupies 182-327; that stretch reads TFREETETDL…RKLRSMMPFI (146 aa). 4 residues coordinate Mg(2+): aspartate 190, glutamate 194, glutamate 226, and glutamate 230. Serine 251 contributes to the substrate binding site.

This sequence belongs to the ketol-acid reductoisomerase family. Mg(2+) serves as cofactor.

The catalysed reaction is (2R)-2,3-dihydroxy-3-methylbutanoate + NADP(+) = (2S)-2-acetolactate + NADPH + H(+). It catalyses the reaction (2R,3R)-2,3-dihydroxy-3-methylpentanoate + NADP(+) = (S)-2-ethyl-2-hydroxy-3-oxobutanoate + NADPH + H(+). It participates in amino-acid biosynthesis; L-isoleucine biosynthesis; L-isoleucine from 2-oxobutanoate: step 2/4. Its pathway is amino-acid biosynthesis; L-valine biosynthesis; L-valine from pyruvate: step 2/4. Its function is as follows. Involved in the biosynthesis of branched-chain amino acids (BCAA). Catalyzes an alkyl-migration followed by a ketol-acid reduction of (S)-2-acetolactate (S2AL) to yield (R)-2,3-dihydroxy-isovalerate. In the isomerase reaction, S2AL is rearranged via a Mg-dependent methyl migration to produce 3-hydroxy-3-methyl-2-ketobutyrate (HMKB). In the reductase reaction, this 2-ketoacid undergoes a metal-dependent reduction by NADPH to yield (R)-2,3-dihydroxy-isovalerate. This chain is Ketol-acid reductoisomerase (NADP(+)), found in Alicyclobacillus acidocaldarius subsp. acidocaldarius (strain ATCC 27009 / DSM 446 / BCRC 14685 / JCM 5260 / KCTC 1825 / NBRC 15652 / NCIMB 11725 / NRRL B-14509 / 104-IA) (Bacillus acidocaldarius).